Here is a 350-residue protein sequence, read N- to C-terminus: Guanine nucleotide-binding protein G(t) subunit alpha (350 aa).

A disordered region spans residues 1 to 21; sequence MGAGASAEEKHSRELEKKLKE. Residue G2 is the site of N-myristoyl glycine attachment. Positions 7–21 are enriched in basic and acidic residues; it reads AEEKHSRELEKKLKE. A G-alpha domain is found at 28 to 350; sequence RTVKLLLLGA…KENLKDCGLF (323 aa). The tract at residues 31 to 44 is G1 motif; that stretch reads KLLLLGAGESGKST. GTP contacts are provided by residues 36 to 43, 171 to 177, 196 to 200, 265 to 268, and A322; these read GAGESGKS, LRSRVKT, DVGGQ, and NKKD. The Mg(2+) site is built by S43 and T177. The interval 169–177 is G2 motif; that stretch reads DVLRSRVKT. The G3 motif stretch occupies residues 192–201; the sequence is FRMFDVGGQR. Residues 261 to 268 are G4 motif; it reads VLFLNKKD. Residues 320–325 are G5 motif; sequence TCATDT.

The protein belongs to the G-alpha family. G(i/o/t/z) subfamily. In terms of assembly, g proteins are composed of 3 units; alpha, beta and gamma. The alpha chain contains the guanine nucleotide binding site.

Its function is as follows. Guanine nucleotide-binding proteins (G proteins) are involved as modulators or transducers in various transmembrane signaling systems. Transducin is an amplifier and one of the transducers of a visual impulse that performs the coupling between rhodopsin and cGMP-phosphodiesterase. In Xenopus laevis (African clawed frog), this protein is Guanine nucleotide-binding protein G(t) subunit alpha (gnat).